We begin with the raw amino-acid sequence, 350 residues long: UDP-rhamnose/UDP-galactose transporter 3 (350 aa).

10 helical membrane passes run 12–32 (AVSD…IIMA), 41–61 (GFAF…TALV), 81–101 (LIWF…SLML), 104–124 (VGFY…MEWI), 133–153 (EVKI…VTDV), 160–180 (FICA…IGSL), 200–220 (AFSL…KFIM), 224–244 (MSSG…FCNI), 257–277 (SFQV…WLLF), and 286–306 (VAGM…MELE).

The protein belongs to the TPT transporter family. TPT (TC 2.A.7.9) subfamily.

Its subcellular location is the golgi apparatus membrane. In terms of biological role, nucleotide-sugar transporter that transports UDP-rhamnose or UDP-galactose and UMP in a strict counter-exchange mode. This is UDP-rhamnose/UDP-galactose transporter 3 from Arabidopsis thaliana (Mouse-ear cress).